We begin with the raw amino-acid sequence, 334 residues long: Fructose-1,6-bisphosphatase class 1 (334 aa).

4 residues coordinate Mg(2+): E92, D114, L116, and D117. Substrate contacts are provided by residues 117–120 (DGSS) and N209. E281 contributes to the Mg(2+) binding site.

It belongs to the FBPase class 1 family. In terms of assembly, homotetramer. The cofactor is Mg(2+).

The protein resides in the cytoplasm. It catalyses the reaction beta-D-fructose 1,6-bisphosphate + H2O = beta-D-fructose 6-phosphate + phosphate. The protein operates within carbohydrate biosynthesis; gluconeogenesis. This is Fructose-1,6-bisphosphatase class 1 from Nitrosomonas eutropha (strain DSM 101675 / C91 / Nm57).